Consider the following 122-residue polypeptide: Proteasome assembly chaperone 3 (122 aa).

An N-acetylmethionine modification is found at methionine 1.

The protein belongs to the PSMG3 family. Homodimer. Interacts with PSMG4. Interacts directly with alpha and beta subunits of the 20S proteasome but dissociates before the formation of half-proteasomes, probably upon recruitment of POMP.

In terms of biological role, chaperone protein which promotes assembly of the 20S proteasome. May cooperate with PSMG1-PSMG2 heterodimers to orchestrate the correct assembly of proteasomes. The sequence is that of Proteasome assembly chaperone 3 from Homo sapiens (Human).